A 312-amino-acid chain; its full sequence is Porphobilinogen deaminase (312 aa).

Cysteine 241 is modified (S-(dipyrrolylmethanemethyl)cysteine).

The protein belongs to the HMBS family. Monomer. Dipyrromethane is required as a cofactor.

The catalysed reaction is 4 porphobilinogen + H2O = hydroxymethylbilane + 4 NH4(+). The protein operates within porphyrin-containing compound metabolism; protoporphyrin-IX biosynthesis; coproporphyrinogen-III from 5-aminolevulinate: step 2/4. It participates in porphyrin-containing compound metabolism; chlorophyll biosynthesis. In terms of biological role, tetrapolymerization of the monopyrrole PBG into the hydroxymethylbilane pre-uroporphyrinogen in several discrete steps. In Chlorobaculum tepidum (strain ATCC 49652 / DSM 12025 / NBRC 103806 / TLS) (Chlorobium tepidum), this protein is Porphobilinogen deaminase.